The chain runs to 96 residues: Co-chaperonin GroES (96 aa).

This sequence belongs to the GroES chaperonin family. Heptamer of 7 subunits arranged in a ring. Interacts with the chaperonin GroEL.

It localises to the cytoplasm. Together with the chaperonin GroEL, plays an essential role in assisting protein folding. The GroEL-GroES system forms a nano-cage that allows encapsulation of the non-native substrate proteins and provides a physical environment optimized to promote and accelerate protein folding. GroES binds to the apical surface of the GroEL ring, thereby capping the opening of the GroEL channel. The sequence is that of Co-chaperonin GroES from Neisseria meningitidis serogroup B (strain ATCC BAA-335 / MC58).